Consider the following 180-residue polypeptide: uncharacterized protein (180 aa).

The N-acetyltransferase domain maps to 31 to 180; that stretch reads LLVRTAEWLR…HLFEKEITAE (150 aa).

This sequence belongs to the acetyltransferase family.

This is an uncharacterized protein from Bacillus subtilis (strain 168).